The primary structure comprises 452 residues: PHO85 cyclin CLG1 (452 aa).

The protein belongs to the cyclin family. PCL1,2 subfamily. In terms of assembly, forms a cyclin-CDK complex with PHO85.

Functionally, cyclin partner of the cyclin-dependent kinase (CDK) PHO85. Has a role in cell integrity and polarized cell growth together with the other PCL1/PCL2 cyclin family members. In Saccharomyces cerevisiae (strain ATCC 204508 / S288c) (Baker's yeast), this protein is PHO85 cyclin CLG1 (CLG1).